Consider the following 137-residue polypeptide: Profilin-3 (137 aa).

It belongs to the profilin family. In terms of assembly, interacts with ACTRT3. As to expression, detected in round spermatids.

It localises to the cytoplasm. The protein resides in the cytoskeleton. Its subcellular location is the nucleus. Binds to actin and affects the structure of the cytoskeleton. Slightly reduces actin polymerization. Binds to poly-L-proline, phosphatidylinositol 3-phosphate (PtdIns(3)P), phosphatidylinositol 4,5-bisphosphate (PtdIns(4,5)P2), and phosphatidylinositol 4-phosphate (PtdIns(4)P). May be involved in spermatogenesis. This Rattus norvegicus (Rat) protein is Profilin-3 (Pfn3).